The primary structure comprises 210 residues: Large ribosomal subunit protein uL3 (210 aa).

The segment at 125–151 (RHGQSRGPMSHGSRYHRRPGSMGPVAP) is disordered.

This sequence belongs to the universal ribosomal protein uL3 family. In terms of assembly, part of the 50S ribosomal subunit. Forms a cluster with proteins L14 and L19.

In terms of biological role, one of the primary rRNA binding proteins, it binds directly near the 3'-end of the 23S rRNA, where it nucleates assembly of the 50S subunit. The chain is Large ribosomal subunit protein uL3 from Bacillus cereus (strain ATCC 14579 / DSM 31 / CCUG 7414 / JCM 2152 / NBRC 15305 / NCIMB 9373 / NCTC 2599 / NRRL B-3711).